Reading from the N-terminus, the 170-residue chain is MVNPIATLLLECGAIEFGEFVLASGARSSYYIDIKAATTNPAVLTEIGKTIAEGREFEMVAGVAVGAVPIAVAVSLASGRPYAVVRKEGKDHGKAGTIIGDVLGKNVLLVEDVTTSGGSALYGLEALRAAGAHVDQVVTVVDREAGAREALAEKGASLLALVRVSELLDG.

5-phospho-alpha-D-ribose 1-diphosphate-binding positions include Arg-86, Lys-87, Lys-90, His-92, and 111–119; that span reads EDVTTSGGS. Residues Thr-115 and Arg-143 each contribute to the orotate site.

This sequence belongs to the purine/pyrimidine phosphoribosyltransferase family. PyrE subfamily. Homodimer. The cofactor is Mg(2+).

The catalysed reaction is orotidine 5'-phosphate + diphosphate = orotate + 5-phospho-alpha-D-ribose 1-diphosphate. It functions in the pathway pyrimidine metabolism; UMP biosynthesis via de novo pathway; UMP from orotate: step 1/2. Its function is as follows. Catalyzes the transfer of a ribosyl phosphate group from 5-phosphoribose 1-diphosphate to orotate, leading to the formation of orotidine monophosphate (OMP). The polypeptide is Orotate phosphoribosyltransferase (Methanoculleus marisnigri (strain ATCC 35101 / DSM 1498 / JR1)).